A 286-amino-acid chain; its full sequence is Ribosomal RNA small subunit methyltransferase H (286 aa).

S-adenosyl-L-methionine-binding positions include 17–19 (AGH), aspartate 36, phenylalanine 63, aspartate 84, and glutamine 91.

The protein belongs to the methyltransferase superfamily. RsmH family.

Its subcellular location is the cytoplasm. The catalysed reaction is cytidine(1402) in 16S rRNA + S-adenosyl-L-methionine = N(4)-methylcytidine(1402) in 16S rRNA + S-adenosyl-L-homocysteine + H(+). Its function is as follows. Specifically methylates the N4 position of cytidine in position 1402 (C1402) of 16S rRNA. The chain is Ribosomal RNA small subunit methyltransferase H from Metamycoplasma arthritidis (strain 158L3-1) (Mycoplasma arthritidis).